Here is a 389-residue protein sequence, read N- to C-terminus: Na(+)/H(+) antiporter NhaA (389 aa).

11 helical membrane passes run 24 to 44, 56 to 76, 94 to 114, 122 to 142, 152 to 172, 176 to 196, 216 to 236, 259 to 279, 291 to 311, 326 to 346, and 363 to 383; these read ILLILCTILSLSIANSLAGPA, LSIEHWVNDALMAVFFLFVGL, LLPIFAAIGGIGVPALIHYTL, AGTGIPMATDIAFALGVLALL, VFLTALAVMDDLGAIIVIAMF, QFSLVYLLSALAVFGLLLVLN, FLMLKSGVHATIAGVLLAFAI, PVAFIILPIFALANTGIVIGS, LGIIGGLVFGKPLGIALLSFV, WTHIVGAGILGGIGFTMSIFI, and MAILMASVAAGGLGFLWLSFF.

This sequence belongs to the NhaA Na(+)/H(+) (TC 2.A.33) antiporter family.

It localises to the cell inner membrane. The catalysed reaction is Na(+)(in) + 2 H(+)(out) = Na(+)(out) + 2 H(+)(in). Functionally, na(+)/H(+) antiporter that extrudes sodium in exchange for external protons. This is Na(+)/H(+) antiporter NhaA from Dechloromonas aromatica (strain RCB).